A 95-amino-acid chain; its full sequence is Co-chaperonin GroES (95 aa).

This sequence belongs to the GroES chaperonin family. Heptamer of 7 subunits arranged in a ring. Interacts with the chaperonin GroEL.

The protein resides in the cytoplasm. Functionally, together with the chaperonin GroEL, plays an essential role in assisting protein folding. The GroEL-GroES system forms a nano-cage that allows encapsulation of the non-native substrate proteins and provides a physical environment optimized to promote and accelerate protein folding. GroES binds to the apical surface of the GroEL ring, thereby capping the opening of the GroEL channel. This chain is Co-chaperonin GroES, found in Francisella philomiragia subsp. philomiragia (strain ATCC 25017 / CCUG 19701 / FSC 153 / O#319-036).